Reading from the N-terminus, the 426-residue chain is Glutamate-1-semialdehyde 2,1-aminomutase (426 aa).

Lys-265 bears the N6-(pyridoxal phosphate)lysine mark.

The protein belongs to the class-III pyridoxal-phosphate-dependent aminotransferase family. HemL subfamily. As to quaternary structure, homodimer. It depends on pyridoxal 5'-phosphate as a cofactor.

Its subcellular location is the cytoplasm. It carries out the reaction (S)-4-amino-5-oxopentanoate = 5-aminolevulinate. It functions in the pathway porphyrin-containing compound metabolism; protoporphyrin-IX biosynthesis; 5-aminolevulinate from L-glutamyl-tRNA(Glu): step 2/2. This Actinobacillus pleuropneumoniae serotype 3 (strain JL03) protein is Glutamate-1-semialdehyde 2,1-aminomutase.